We begin with the raw amino-acid sequence, 199 residues long: Urease accessory protein UreG (199 aa).

Residue Gly8–Thr15 participates in GTP binding.

The protein belongs to the SIMIBI class G3E GTPase family. UreG subfamily. Homodimer. UreH, UreF and UreG form a complex that acts as a GTP-hydrolysis-dependent molecular chaperone, activating the urease apoprotein by helping to assemble the nickel containing metallocenter of UreC. The UreE protein probably delivers the nickel.

The protein resides in the cytoplasm. Its function is as follows. Facilitates the functional incorporation of the urease nickel metallocenter. This process requires GTP hydrolysis, probably effectuated by UreG. The polypeptide is Urease accessory protein UreG (Helicobacter pylori (strain J99 / ATCC 700824) (Campylobacter pylori J99)).